A 1168-amino-acid chain; its full sequence is MTILTTLIKEDNHFQDLNQVFGQANTLVTGLSPSAKVTMIAEKYAQSNQQLLLITNNLYQADKLETDLLQFIDAEELYKYPVQDIMTEEFSTQSPQLMSERIRTLTALAQGKKGLFIVPLNGLKKWLTPVEMWQNHQMTLRVGEDIDVDQFLNKLVNMGYKRESVVSHIGEFSLRGGIIDIFPLIGEPIRIELFDTKIDSIRDFDVETQRSKDNVEEVDITTASDYIITEEVISHLKEELKTAYENTRPKIDKSVRNDLKETYESFKLFESTYFDHQILRRLVAFMYETPSTIIEYFQKDAIIAVDEFNRIKETEESLTVESDSFISNIIESGNGFIGQSFIKYDDFETLIEGYPVTYFSLFATTMPIKLNHIIKFSCKPVQQFYGQYDIMRSEFQRYVNQNYHIVVLVETETKVERMQAMLSEMHIPSITKLHRSMSSGQAVIIEGSLSEGFELPDMGLVVITERELFKSKQKKQRKRTKAISNAEKIKSYQDLNVGDYIVHVHHGVGRYLGVETLEVGQTHRDYIKLQYKGTDQLFVPVDQMDQVQKYVASEDKTPKLNKLGGSEWKKTKAKVQQSVEDIAEELIDLYKEREMAEGYQYGEDTAEQTTFELDFPYELTPDQAKSIDEIKDDMQKSRPMDRLLCGDVGYGKTEVAVRAAFKAVMEGKQVAFLVPTTILAQQHYETLIERMQDFPVEIQLMSRFRTPKEIKQTKEGLKTGFVDIVVGTHKLLSKDIQYKDLGLLIVDEEQRFGVRHKERIKTLKHNVDVLTLTATPIPRTLHMSMLGVRDLSVIETPPENRFPVQTYVLEQNMSFIKEALERELSRDGQVFYLYNKVQSIYEKREQLQMLMPDANIAVAHGQMTERDLEETMLSFINNEYDILVTTTIIETGVDVPNANTLIIEDADRFGLSQLYQLRGRVGRSSRIGYAYFLHPANKVLTETAEDRLQAIKEFTELGSGFKIAMRDLNIRGAGNLLGKQQHGFIDTVGFDLYSQMLEEAVNEKRGIKEPESEVPEVEVDLNLDAYLPTEYIANEQAKIEIYKKLRKTETFDQIIDIKDELIDRFNDYPVEVARLLDIVEIKVHALHSGITLIKDKGKIIDIHLSVKATENIDGEVLFKATQPLGRTMKVGVQNNAMTITLTKQNQWLDSLKFLVKCIEESMRISDEA.

Residues 633 to 794 form the Helicase ATP-binding domain; the sequence is DMQKSRPMDR…MLGVRDLSVI (162 aa). 646–653 contacts ATP; that stretch reads GDVGYGKT. A DEEQ box motif is present at residues 747–750; sequence DEEQ. In terms of domain architecture, Helicase C-terminal spans 808 to 969; that stretch reads VLEQNMSFIK…GFKIAMRDLN (162 aa).

In the N-terminal section; belongs to the UvrB family. It in the C-terminal section; belongs to the helicase family. RecG subfamily.

The protein resides in the cytoplasm. In terms of biological role, couples transcription and DNA repair by recognizing RNA polymerase (RNAP) stalled at DNA lesions. Mediates ATP-dependent release of RNAP and its truncated transcript from the DNA, and recruitment of nucleotide excision repair machinery to the damaged site. This Staphylococcus aureus (strain MSSA476) protein is Transcription-repair-coupling factor.